Here is a 1211-residue protein sequence, read N- to C-terminus: RNA helicase Mov10l1 (1211 aa).

2 disordered regions span residues 340–385 (KENS…GENG) and 674–710 (WNHAQDTKSSGQSTSKKNRKTMTDQAEHGTEERRVGD). 2 stretches are compositionally biased toward polar residues: residues 345–372 (DENINSLNSHTKNKTSQMSESSLVNNRG) and 674–688 (WNHAQDTKSSGQSTS). Positions 694-710 (TMTDQAEHGTEERRVGD) are enriched in basic and acidic residues. Residue 770–777 (GPPGTGKT) participates in ATP binding. The DEAG box motif lies at 886–889 (DEAG). The segment at 1192–1211 (DPSYPVVPESTGPEKHQEPS) is disordered.

It belongs to the DNA2/NAM7 helicase family. SDE3 subfamily. As to quaternary structure, interacts with PIWIL1. Interacts with PIWIL2. Interacts with PIWIL4. Interacts with HSPA2. Interacts with PLD6. In terms of tissue distribution, specifically expressed in testis.

Its subcellular location is the cytoplasm. The catalysed reaction is ATP + H2O = ADP + phosphate + H(+). Its function is as follows. ATP-dependent RNA helicase required during spermatogenesis to repress transposable elements and prevent their mobilization, which is essential for germline integrity. Acts via the piRNA metabolic process, which mediates the repression of transposable elements during meiosis by forming complexes composed of piRNAs and Piwi proteins and governs the methylation and subsequent repression of transposons. Involved in the primary piRNA metabolic process. Specifically binds to piRNA precursors and promotes the generation of intermediate piRNA processing fragments that are subsequently loaded to Piwi proteins. Acts via its ATP-dependent RNA helicase activity: displays 5'-3' RNA unwinding activity and probably mediates unwinding and funneling of single-stranded piRNA precursor transcripts to the endonuclease that catalyzes the first cleavage step of piRNA processing to generate piRNA intermediate fragments that are subsequently loaded to Piwi proteins. The chain is RNA helicase Mov10l1 from Homo sapiens (Human).